The sequence spans 664 residues: Translation factor guf1, mitochondrial (664 aa).

Residues 1–43 (MRGCLQLARWLSAGPKCPAASLPKAPSGLYNTIRSFTSSAQLA) constitute a mitochondrion transit peptide. Residues 66 to 246 (DRYRNFCIVA…TVVEKIPAPV (181 aa)) enclose the tr-type G domain. Residues 75–82 (AHVDHGKS), 139–143 (DTPGH), and 193–196 (NKVD) each bind GTP.

The protein belongs to the TRAFAC class translation factor GTPase superfamily. Classic translation factor GTPase family. LepA subfamily.

It localises to the mitochondrion inner membrane. It carries out the reaction GTP + H2O = GDP + phosphate + H(+). In terms of biological role, promotes mitochondrial protein synthesis. May act as a fidelity factor of the translation reaction, by catalyzing a one-codon backward translocation of tRNAs on improperly translocated ribosomes. Binds to mitochondrial ribosomes in a GTP-dependent manner. This Aspergillus oryzae (strain ATCC 42149 / RIB 40) (Yellow koji mold) protein is Translation factor guf1, mitochondrial (guf1).